Here is a 340-residue protein sequence, read N- to C-terminus: MITSFPVRNFLPRVTITSCAFFSKESTSAAGTVAEKKESELQKFAGKSNLLEKKKVGIFGTSTVPINTNFPNPKGVVDYDPDFSIKELVAELPNTRKTQGAKLSEEIKNAFNSVSIEKTELLEDIGFVRHNEARVDYRFDTQEKLDLWKIGCDSDWKEGFSTCSLVNSDRGTAVFSGNISTKVLKDGRVERAGWASMKLEDRKAFNRKKFLSKWRNFSHLLLKVRGDGRSYKIMLHSPLSMDFTWGDSFSHPLHTHGGPYWQYEKIPFSKFFHTVAGRIQDRQYRVNLEDTSSIGIVLMDRIDGDFRLEIDYIGVYNDTTHVEDFAYETYTLPVFNTHGF.

This sequence belongs to the CIA30 family.

It is found in the mitochondrion. In terms of biological role, chaperone protein involved in the assembly of the mitochondrial NADH:ubiquinone oxidoreductase complex (complex I). Required for normal growth and reproduction. This chain is Probable complex I intermediate-associated protein 30, mitochondrial (nuaf-1), found in Caenorhabditis elegans.